Consider the following 348-residue polypeptide: Selenide, water dikinase (348 aa).

Cys17 is a catalytic residue. Residues Lys20 and 48–50 (TSD) contribute to the ATP site. Residue Asp51 participates in Mg(2+) binding. ATP-binding positions include Asp68, Asp91, and 139 to 141 (GHT). Mg(2+) is bound at residue Asp91. Asp227 is a binding site for Mg(2+).

The protein belongs to the selenophosphate synthase 1 family. Class I subfamily. Homodimer. Requires Mg(2+) as cofactor.

The catalysed reaction is hydrogenselenide + ATP + H2O = selenophosphate + AMP + phosphate + 2 H(+). In terms of biological role, synthesizes selenophosphate from selenide and ATP. In Dechloromonas aromatica (strain RCB), this protein is Selenide, water dikinase.